A 115-amino-acid polypeptide reads, in one-letter code: Small ribosomal subunit protein bS6 (115 aa).

The protein belongs to the bacterial ribosomal protein bS6 family.

In terms of biological role, binds together with bS18 to 16S ribosomal RNA. The protein is Small ribosomal subunit protein bS6 of Syntrophotalea carbinolica (strain DSM 2380 / NBRC 103641 / GraBd1) (Pelobacter carbinolicus).